Here is a 244-residue protein sequence, read N- to C-terminus: MFNNLKNKEQEELLPEHIGIIMDGNGRWAKQKGKPRIFGHKAGMDSLKDVAVHGARRGIKVMTVYAFSTENWTRPVDEVKFIMSLPIDFYSKYVPVLKEENIQIRMIGEREGLPKATLDSIDRAAQETSENDGMILNFAMNYGGRRDIILAIQELAKSGQDLSLLTEEELSKHLQTAVLSENLRDPDLIIRTSGEQRMSNFLTWQSAYSELYFAQTAWPDFDDKELDKAISAFQKRDRRYGGVK.

Residue D23 is part of the active site. D23 contacts Mg(2+). Residues 24–27 (GNGR), W28, R36, H40, and 68–70 (STE) contribute to the substrate site. The active-site Proton acceptor is N71. Substrate contacts are provided by residues W72, R74, R191, and 197–199 (RMS). Residue E210 participates in Mg(2+) binding.

The protein belongs to the UPP synthase family. As to quaternary structure, homodimer. Mg(2+) serves as cofactor.

Its function is as follows. Catalyzes the condensation of isopentenyl diphosphate (IPP) with allylic pyrophosphates generating different type of terpenoids. In Lactococcus lactis subsp. lactis (strain IL1403) (Streptococcus lactis), this protein is Isoprenyl transferase.